A 147-amino-acid chain; its full sequence is Sentan (147 aa).

The segment at 1-36 is disordered; the sequence is MGGCMHSTWDHALHSRGEPRPSEAPASISAPSKMPK. The span at 8 to 21 shows a compositional bias: basic and acidic residues; the sequence is TWDHALHSRGEPRP. Low complexity predominate over residues 23-32; that stretch reads EAPASISAPS.

This sequence belongs to the S-100 family. As to expression, expressed exclusively in ciliated epithelial cells. Detected in ciliated epithelium of trachea and oviduct (at protein level).

The protein localises to the cell projection. It localises to the cilium. Functionally, may be a component of the linker structure that bridges the ciliary membrane and peripheral singlet microtubules. This chain is Sentan (Sntn), found in Mus musculus (Mouse).